The primary structure comprises 515 residues: Maturase K (515 aa).

This sequence belongs to the intron maturase 2 family. MatK subfamily.

It localises to the plastid. Its subcellular location is the chloroplast. Usually encoded in the trnK tRNA gene intron. Probably assists in splicing its own and other chloroplast group II introns. The sequence is that of Maturase K from Pinus leiophylla (Chihuahua pine).